We begin with the raw amino-acid sequence, 151 residues long: MKIVLQRVQQSHVSVNQHIVGQINQGLTLLVGISPTDTDAELQWLARKCLDLRLFPDPEGNPWQASIQDIQGEILVVSQFTLYGDCRKGRRPSFSGSAKPDQAEQIYEKFVAFLRQSGLKIETGQFGAMMQVEISNDGPVTLLLEREAKPA.

A Gly-cisPro motif, important for rejection of L-amino acids motif is present at residues 138 to 139 (GP).

It belongs to the DTD family. In terms of assembly, homodimer.

It is found in the cytoplasm. The catalysed reaction is glycyl-tRNA(Ala) + H2O = tRNA(Ala) + glycine + H(+). It catalyses the reaction a D-aminoacyl-tRNA + H2O = a tRNA + a D-alpha-amino acid + H(+). In terms of biological role, an aminoacyl-tRNA editing enzyme that deacylates mischarged D-aminoacyl-tRNAs. Also deacylates mischarged glycyl-tRNA(Ala), protecting cells against glycine mischarging by AlaRS. Acts via tRNA-based rather than protein-based catalysis; rejects L-amino acids rather than detecting D-amino acids in the active site. By recycling D-aminoacyl-tRNA to D-amino acids and free tRNA molecules, this enzyme counteracts the toxicity associated with the formation of D-aminoacyl-tRNA entities in vivo and helps enforce protein L-homochirality. The protein is D-aminoacyl-tRNA deacylase of Picosynechococcus sp. (strain ATCC 27264 / PCC 7002 / PR-6) (Agmenellum quadruplicatum).